The sequence spans 103 residues: MYAIFQSGGKQHRVSEGQVVRLEKLELATGEKVEFDSVLMVVNGEDIKIGAPVVAGAKVMAEVVAQGRGDKIKIVKFRRRKHSRKQQGHRQWFTEVKITGIQA.

It belongs to the bacterial ribosomal protein bL21 family. Part of the 50S ribosomal subunit. Contacts protein L20.

Functionally, this protein binds to 23S rRNA in the presence of protein L20. This Haemophilus ducreyi (strain 35000HP / ATCC 700724) protein is Large ribosomal subunit protein bL21.